The chain runs to 202 residues: B-cell CLL/lymphoma 7 protein family member B (202 aa).

A disordered region spans residues 53–202; that stretch reads DSKEKEKSKS…PTVPQTASES (150 aa). The span at 90–99 shows a compositional bias: polar residues; sequence ENSNQSSVSD. The segment covering 107–123 has biased composition (low complexity); sequence SSTNSSPSPQQSESLSP. A phosphoserine mark is found at Ser-114, Ser-118, Ser-120, Ser-122, Ser-127, Ser-148, and Ser-152.

The protein belongs to the BCL7 family. In terms of tissue distribution, ubiquitous.

In terms of biological role, positive regulator of apoptosis. Plays a role in the Wnt signaling pathway, negatively regulating the expression of Wnt signaling components CTNNB1 and HMGA1. Involved in cell cycle progression, maintenance of the nuclear structure and stem cell differentiation. May play a role in lung tumor development or progression. This chain is B-cell CLL/lymphoma 7 protein family member B (BCL7B), found in Homo sapiens (Human).